A 217-amino-acid polypeptide reads, in one-letter code: Small ribosomal subunit protein uS3 (217 aa).

The KH type-2 domain maps to 38–106; the sequence is IRKFIDNELK…KVHINVIEIK (69 aa).

It belongs to the universal ribosomal protein uS3 family. As to quaternary structure, part of the 30S ribosomal subunit. Forms a tight complex with proteins S10 and S14.

Its function is as follows. Binds the lower part of the 30S subunit head. Binds mRNA in the 70S ribosome, positioning it for translation. The sequence is that of Small ribosomal subunit protein uS3 from Staphylococcus epidermidis (strain ATCC 35984 / DSM 28319 / BCRC 17069 / CCUG 31568 / BM 3577 / RP62A).